Reading from the N-terminus, the 123-residue chain is uncharacterized protein (123 aa).

Residues 34–123 are disordered; it reads PEKISQTVKK…MNRDGGVKKE (90 aa). Basic and acidic residues-rich tracts occupy residues 50 to 60, 74 to 100, and 107 to 123; these read KKIDENKDKSP, TAKD…EFSQ, and EETR…VKKE.

The protein localises to the mitochondrion. This is an uncharacterized protein from Schizosaccharomyces pombe (strain 972 / ATCC 24843) (Fission yeast).